The primary structure comprises 478 residues: Sulfate adenylyltransferase subunit 1 (478 aa).

The region spanning 24 to 240 (KSLLRFLTCG…VLENVDIDAD (217 aa)) is the tr-type G domain. Residues 33 to 40 (GSVDDGKS) are G1. GTP is bound at residue 33–40 (GSVDDGKS). The tract at residues 91–95 (GITID) is G2. The segment at 112 to 115 (DTPG) is G3. GTP contacts are provided by residues 112–116 (DTPGH) and 167–170 (NKMD). Positions 167 to 170 (NKMD) are G4. The segment at 206 to 208 (SAL) is G5.

This sequence belongs to the TRAFAC class translation factor GTPase superfamily. Classic translation factor GTPase family. CysN/NodQ subfamily. In terms of assembly, heterodimer composed of CysD, the smaller subunit, and CysN.

The catalysed reaction is sulfate + ATP + H(+) = adenosine 5'-phosphosulfate + diphosphate. It functions in the pathway sulfur metabolism; hydrogen sulfide biosynthesis; sulfite from sulfate: step 1/3. In terms of biological role, with CysD forms the ATP sulfurylase (ATPS) that catalyzes the adenylation of sulfate producing adenosine 5'-phosphosulfate (APS) and diphosphate, the first enzymatic step in sulfur assimilation pathway. APS synthesis involves the formation of a high-energy phosphoric-sulfuric acid anhydride bond driven by GTP hydrolysis by CysN coupled to ATP hydrolysis by CysD. The chain is Sulfate adenylyltransferase subunit 1 from Aliivibrio fischeri (strain MJ11) (Vibrio fischeri).